A 551-amino-acid chain; its full sequence is Preprotein translocase subunit SCY1, chloroplastic (551 aa).

Residues 1 to 67 (MITVSEVSSY…WNLGLVINSR (67 aa)) constitute a chloroplast transit peptide. Helical transmembrane passes span 142–162 (FLKLLGFLALSRLGIYIPLGG), 192–212 (LGICSLGIVPFINAQIVFQLL), 241–261 (ASVGFAIVQAIGQVFYLRPYV), 268–288 (WVVSSVTLLTLGSVLTTYIGE), 295–315 (LGNGTSLLIFTSIISYLPASF), 328–348 (YTGLGTIVVSFLLLVLGIVYV), 382–402 (SAGVMPIIFSTSSLALPATLA), 415–435 (FALTPGGSFYLPTNILLIAFF), 482–502 (VLGSAFLAVLAAGPAVVEQIT), and 503–523 (HLTAFRGFAGTSVLILVGCAT).

The protein belongs to the SecY/SEC61-alpha family. In terms of assembly, part of the Sec protein translocation apparatus. Interacts with SECE1, ALB3 and probably with SECA1.

The protein resides in the plastid. The protein localises to the chloroplast thylakoid membrane. Its function is as follows. Involved in protein export. Probably interacts with other proteins to allow the translocation of proteins across the chloroplast thylakoid membranes. Required for normal greening during embryogenesis. Central subunit of the protein translocation channel SecYE. Consists of two halves formed by TMs 1-5 and 6-10. These two domains form a lateral gate at the front which open onto the bilayer between TMs 2 and 7, and are clamped together by SecE at the back. The channel is closed by both a pore ring composed of hydrophobic SecY resides and a short helix (helix 2A) on the extracellular side of the membrane which forms a plug. The protein is Preprotein translocase subunit SCY1, chloroplastic (SCY1) of Arabidopsis thaliana (Mouse-ear cress).